A 77-amino-acid polypeptide reads, in one-letter code: Small ribosomal subunit protein bS21 (77 aa).

Positions 38 to 52 (KPSEKRAREKAEAIR) are enriched in basic and acidic residues. Residues 38–77 (KPSEKRAREKAEAIRRTRKLARKRAQREGIVSNGRTASVR) form a disordered region. Basic residues predominate over residues 53–62 (RTRKLARKRA).

Belongs to the bacterial ribosomal protein bS21 family.

This chain is Small ribosomal subunit protein bS21, found in Bartonella bacilliformis (strain ATCC 35685 / KC583 / Herrer 020/F12,63).